A 348-amino-acid chain; its full sequence is [FeFe] hydrogenase maturase subunit HydE (348 aa).

Residues 49–268 enclose the Radical SAM core domain; it reads DEVHIRAIIE…LLPDSNIPAT (220 aa). [4Fe-4S] cluster-binding residues include cysteine 63, cysteine 67, and cysteine 70. Residues cysteine 311, cysteine 319, and cysteine 322 each contribute to the [2Fe-2S] cluster site.

This sequence belongs to the radical SAM superfamily. HydE family. As to quaternary structure, monomer. Requires [4Fe-4S] cluster as cofactor. [2Fe-2S] cluster serves as cofactor.

Functionally, required for the maturation of the [FeFe]-hydrogenase HydA. Catalyzes the reductive cleavage of S-adenosyl-L-methionine (in vitro), suggesting it may contribute to the biosynthesis of an essential sulfur-containing ligand that binds to the hydrogenase active site [2Fe-2S] cluster. In Thermotoga maritima (strain ATCC 43589 / DSM 3109 / JCM 10099 / NBRC 100826 / MSB8), this protein is [FeFe] hydrogenase maturase subunit HydE.